We begin with the raw amino-acid sequence, 479 residues long: Endosomal/lysosomal proton channel TMEM175 (479 aa).

The tract at residues 1–26 is disordered; that stretch reads MSGPQAPEPTLEGQADASAGSPDEDA. The Cytoplasmic segment spans residues 1–33; it reads MSGPQAPEPTLEGQADASAGSPDEDAAEGIQHS. A helical membrane pass occupies residues 34–56; that stretch reads HRMLSFSDALLSIIATVMEFDKS. Positions 35 to 41 match the RxxxFSD motif 1 motif; it reads RMLSFSD. The short helix H2-1 stretch occupies residues 52 to 58; sequence EFDKSVQ. Over 57-64 the chain is Lumenal; that stretch reads VQRLLATR. Residues 65-87 traverse the membrane as a helical segment; the sequence is IAVYLMTFLIVTVAWAAHTRLFQ. Residues 88–93 are Cytoplasmic-facing; that stretch reads VVGKID. Residues 94–103 traverse the membrane as a helical segment; sequence DTLALLNLFS. At 104 to 113 the chain is on the lumenal side; it reads LMVTFPEVPL. Residues 114 to 135 traverse the membrane as a helical segment; the sequence is GIFLFCMCVIAIGAVQALIVLY. Topologically, residues 136 to 159 are cytoplasmic; the sequence is AFHFPHLLSPQIERSAHRGLYRQR. The helical transmembrane segment at 160–180 threads the bilayer; that stretch reads VLGIIVRGPALCLAAAGFSLF. At 181 to 185 the chain is on the lumenal side; the sequence is FYPAS. The chain crosses the membrane as a helical span at residues 186 to 205; it reads YLLMAMVIVLPHVSKAAGWC. The Cytoplasmic segment spans residues 206 to 232; it reads RAQLVGPREPPAHSVEVFTFDLHEPLS. Residues 233 to 257 form a helical membrane-spanning segment; the sequence is KERVEAFSDGVYAIVATLLILDICE. The short motif at 235 to 241 is the RxxxFSD motif 2 element; sequence RVEAFSD. The Lumenal portion of the chain corresponds to 258–284; the sequence is DNVPDAKDVKEKFQGSLVAALGESGPH. The short helix H1-2 stretch occupies residues 263–271; the sequence is AKDVKEKFQ. The segment at 273-279 is short helix H2-2; it reads SLVAALG. The chain crosses the membrane as a helical span at residues 285 to 307; the sequence is FLAYFGSFATVGLLWFAHHSLFL. The Cytoplasmic portion of the chain corresponds to 308-313; that stretch reads HIRRAT. A helical membrane pass occupies residues 314 to 335; the sequence is QPMGLLNTLSLAFVGGLPLAYQ. Topologically, residues 336 to 350 are lumenal; the sequence is QTSAFTKQPRDELES. The helical transmembrane segment at 351 to 371 threads the bilayer; sequence VRISCAIIFLASIFQFAIWTT. Topologically, residues 372–391 are cytoplasmic; that stretch reads ALLQEGETLQPSARFGGREH. The chain crosses the membrane as a helical span at residues 392 to 415; the sequence is AFMFAKLALYPCASLLAFACTCVL. Over 416-417 the chain is Lumenal; sequence SS. Residues 418 to 444 traverse the membrane as a helical segment; sequence FSTAIFHAMQIAVPFAFLLLRLLVRLA. Residues 445–479 are Cytoplasmic-facing; that stretch reads LAGLRALRGLVGPVLARPAPGAADEAQSPLLPAPC.

This sequence belongs to the TMEM175 family. As to quaternary structure, homodimer. Interacts with AKT (AKT1, AKT2 or AKT3); leading to formation of the lysoK(GF) complex, which activates the channel. Interacts with LAMP1; inhibiting the proton channel activity of TMEM175. Interacts with LAMP2; inhibiting the proton channel activity of TMEM175.

The protein resides in the endosome membrane. It localises to the lysosome membrane. It carries out the reaction H(+)(in) = H(+)(out). The enzyme catalyses K(+)(in) = K(+)(out). Active at low pH (under pH 4.6): proton channel activity is activated by luminal side protons. Polyunsaturated fatty acids, such as arachidonic acid, also activate the channel activity. Proton channel activity is directly inhibited by LAMP1 or LAMP2, facilitating lysosomal acidification. Channel activity is activated following interaction with AKT (AKT1, AKT2 or AKT3): interaction promotes activation from closed to an open state. Activation by AKT is independent of AKT serine/threonine-protein kinase activity. Functionally, proton-activated proton channel that catalyzes proton efflux from endosomes and lysosomes to maintain a steady-state pH. Activated at low pH (under pH 4.6) by luminal side protons: selectively mediates lysosomal proton release from lysosomes, eliciting a proton leak that balances V-ATPase activity to maintain pH homeostasis. Regulation of lumenal pH stability is required for autophagosome-lysosome fusion. Also acts as a potassium channel at higher pH, regulating potassium conductance in endosomes and lysosomes. Constitutes the pore-forming subunit of the lysoK(GF) complex, a complex activated by extracellular growth factors. The lysoK(GF) complex is composed of TMEM175 and AKT (AKT1, AKT2 or AKT3), a major target of growth factor receptors: in the complex, TMEM175 channel is opened by conformational changes by AKT, leading to its activation. The lysoK(GF) complex is required to protect neurons against stress-induced damage. The protein is Endosomal/lysosomal proton channel TMEM175 of Bos taurus (Bovine).